Reading from the N-terminus, the 91-residue chain is Large ribosomal subunit protein uL22 (91 aa).

This sequence belongs to the universal ribosomal protein uL22 family. Part of the 50S ribosomal subunit.

Functionally, this protein binds specifically to 23S rRNA; its binding is stimulated by other ribosomal proteins, e.g. L4, L17, and L20. It is important during the early stages of 50S assembly. It makes multiple contacts with different domains of the 23S rRNA in the assembled 50S subunit and ribosome. In terms of biological role, the globular domain of the protein is located near the polypeptide exit tunnel on the outside of the subunit, while an extended beta-hairpin is found that lines the wall of the exit tunnel in the center of the 70S ribosome. This Pigeon pea witches'-broom phytoplasma protein is Large ribosomal subunit protein uL22 (rplV).